The following is a 361-amino-acid chain: Chorismate synthase (361 aa).

Residues 37–59 form a disordered region; it reads TEEDLQHDLDRRRPGTSRYTTPR. Basic and acidic residues predominate over residues 40–49; that stretch reads DLQHDLDRRR. Arg-48 and Arg-54 together coordinate NADP(+). FMN is bound by residues 125–127, 238–239, Gly-278, 293–297, and Arg-319; these read RSS, NA, and KPTSS.

This sequence belongs to the chorismate synthase family. As to quaternary structure, homotetramer. The cofactor is FMNH2.

The catalysed reaction is 5-O-(1-carboxyvinyl)-3-phosphoshikimate = chorismate + phosphate. Its pathway is metabolic intermediate biosynthesis; chorismate biosynthesis; chorismate from D-erythrose 4-phosphate and phosphoenolpyruvate: step 7/7. Functionally, catalyzes the anti-1,4-elimination of the C-3 phosphate and the C-6 proR hydrogen from 5-enolpyruvylshikimate-3-phosphate (EPSP) to yield chorismate, which is the branch point compound that serves as the starting substrate for the three terminal pathways of aromatic amino acid biosynthesis. This reaction introduces a second double bond into the aromatic ring system. The chain is Chorismate synthase from Erwinia tasmaniensis (strain DSM 17950 / CFBP 7177 / CIP 109463 / NCPPB 4357 / Et1/99).